The following is a 380-amino-acid chain: 3-isopropylmalate dehydratase large subunit (380 aa).

3 residues coordinate [4Fe-4S] cluster: cysteine 262, cysteine 320, and cysteine 323.

It belongs to the aconitase/IPM isomerase family. LeuC type 2 subfamily. Heterodimer of LeuC and LeuD. [4Fe-4S] cluster is required as a cofactor.

The catalysed reaction is (2R,3S)-3-isopropylmalate = (2S)-2-isopropylmalate. It functions in the pathway amino-acid biosynthesis; L-leucine biosynthesis; L-leucine from 3-methyl-2-oxobutanoate: step 2/4. Its function is as follows. Catalyzes the isomerization between 2-isopropylmalate and 3-isopropylmalate, via the formation of 2-isopropylmaleate. The chain is 3-isopropylmalate dehydratase large subunit from Thermococcus kodakarensis (strain ATCC BAA-918 / JCM 12380 / KOD1) (Pyrococcus kodakaraensis (strain KOD1)).